A 216-amino-acid polypeptide reads, in one-letter code: Eukaryotic translation initiation factor isoform 4E-2 (216 aa).

The disordered stretch occupies residues 1 to 23 (MAEVEAPATAVEAPAAAVATTTP). Cys113 and Cys152 are disulfide-bonded.

This sequence belongs to the eukaryotic initiation factor 4E family. In terms of assembly, EIF4F is a multi-subunit complex, the composition of which varies with external and internal environmental conditions. It is composed of at least EIF4A, EIF4E and EIF4G. EIF4E is also known to interact with other partners. In higher plants two isoforms of EIF4F have been identified, named isoform EIF4F and isoform EIF(iso)4F. Isoform EIF4F has subunits p220 and p26, whereas isoform EIF(iso)4F has subunits p82 and p28. According to the redox status, the Cys-113-Cys-152 disulfide bridge may have a role in regulating protein function by affecting its ability to bind capped mRNA.

Recognizes and binds the 7-methylguanosine-containing mRNA cap during an early step in the initiation of protein synthesis and facilitates ribosome binding by inducing the unwinding of the mRNAs secondary structures. The sequence is that of Eukaryotic translation initiation factor isoform 4E-2 from Zea mays (Maize).